Here is a 358-residue protein sequence, read N- to C-terminus: UDP-N-acetylglucosamine--N-acetylmuramyl-(pentapeptide) pyrophosphoryl-undecaprenol N-acetylglucosamine transferase (358 aa).

UDP-N-acetyl-alpha-D-glucosamine contacts are provided by residues 13 to 15 (TAG), arginine 166, serine 196, and glutamine 291.

The protein belongs to the glycosyltransferase 28 family. MurG subfamily.

The protein localises to the cell membrane. It carries out the reaction di-trans,octa-cis-undecaprenyl diphospho-N-acetyl-alpha-D-muramoyl-L-alanyl-D-glutamyl-meso-2,6-diaminopimeloyl-D-alanyl-D-alanine + UDP-N-acetyl-alpha-D-glucosamine = di-trans,octa-cis-undecaprenyl diphospho-[N-acetyl-alpha-D-glucosaminyl-(1-&gt;4)]-N-acetyl-alpha-D-muramoyl-L-alanyl-D-glutamyl-meso-2,6-diaminopimeloyl-D-alanyl-D-alanine + UDP + H(+). Its pathway is cell wall biogenesis; peptidoglycan biosynthesis. In terms of biological role, cell wall formation. Catalyzes the transfer of a GlcNAc subunit on undecaprenyl-pyrophosphoryl-MurNAc-pentapeptide (lipid intermediate I) to form undecaprenyl-pyrophosphoryl-MurNAc-(pentapeptide)GlcNAc (lipid intermediate II). This is UDP-N-acetylglucosamine--N-acetylmuramyl-(pentapeptide) pyrophosphoryl-undecaprenol N-acetylglucosamine transferase from Clostridium botulinum (strain Alaska E43 / Type E3).